Here is a 120-residue protein sequence, read N- to C-terminus: Protein Wnt-9 (120 aa).

The O-palmitoleoyl serine; by PORCN moiety is linked to residue Ser1. An intrachain disulfide couples Cys90 to Cys101.

Belongs to the Wnt family. Post-translationally, palmitoleoylation is required for efficient binding to frizzled receptors. Depalmitoleoylation leads to Wnt signaling pathway inhibition.

It is found in the secreted. It localises to the extracellular space. The protein resides in the extracellular matrix. Ligand for members of the frizzled family of seven transmembrane receptors. Probable developmental protein. May be a signaling molecule which affects the development of discrete regions of tissues. Is likely to signal over only few cell diameters. The polypeptide is Protein Wnt-9 (WNT-9) (Alopias vulpinus (Common thresher shark)).